The primary structure comprises 218 residues: Probable transaldolase (218 aa).

Catalysis depends on Lys87, which acts as the Schiff-base intermediate with substrate.

The protein belongs to the transaldolase family. Type 3B subfamily.

The protein localises to the cytoplasm. It catalyses the reaction D-sedoheptulose 7-phosphate + D-glyceraldehyde 3-phosphate = D-erythrose 4-phosphate + beta-D-fructose 6-phosphate. The protein operates within carbohydrate degradation; pentose phosphate pathway; D-glyceraldehyde 3-phosphate and beta-D-fructose 6-phosphate from D-ribose 5-phosphate and D-xylulose 5-phosphate (non-oxidative stage): step 2/3. Transaldolase is important for the balance of metabolites in the pentose-phosphate pathway. This is Probable transaldolase from Flavobacterium psychrophilum (strain ATCC 49511 / DSM 21280 / CIP 103535 / JIP02/86).